We begin with the raw amino-acid sequence, 302 residues long: Sulfate adenylyltransferase subunit 2 (302 aa).

The interval 280-302 (RQGRAIDHDQSGSMELKKRQGYF) is disordered.

It belongs to the PAPS reductase family. CysD subfamily. Heterodimer composed of CysD, the smaller subunit, and CysN.

It catalyses the reaction sulfate + ATP + H(+) = adenosine 5'-phosphosulfate + diphosphate. It functions in the pathway sulfur metabolism; hydrogen sulfide biosynthesis; sulfite from sulfate: step 1/3. With CysN forms the ATP sulfurylase (ATPS) that catalyzes the adenylation of sulfate producing adenosine 5'-phosphosulfate (APS) and diphosphate, the first enzymatic step in sulfur assimilation pathway. APS synthesis involves the formation of a high-energy phosphoric-sulfuric acid anhydride bond driven by GTP hydrolysis by CysN coupled to ATP hydrolysis by CysD. The sequence is that of Sulfate adenylyltransferase subunit 2 from Vibrio parahaemolyticus serotype O3:K6 (strain RIMD 2210633).